Consider the following 54-residue polypeptide: Relaxin (54 aa).

Gln1 bears the Pyrrolidone carboxylic acid mark. Disulfide bonds link Cys10-Cys41, Cys22-Cys54, and Cys40-Cys45.

This sequence belongs to the insulin family. In terms of assembly, heterodimer of a B chain and an A chain linked by two disulfide bonds.

Its subcellular location is the secreted. In terms of biological role, relaxin is an ovarian hormone that acts with estrogen to produce dilatation of the birth canal in many mammals. This chain is Relaxin, found in Balaenoptera acutorostrata (Common minke whale).